A 538-amino-acid polypeptide reads, in one-letter code: Sensor protein CitS (538 aa).

The Cytoplasmic segment spans residues 1–13 (MKRRLFPLTFSAK). A helical transmembrane segment spans residues 14 to 34 (MMGFIALLIIAMFVLLGVFLN). At 35–174 (EQYARTLEEQ…DIQQVIGERL (140 aa)) the chain is on the extracellular side. Residues 175–195 (IAMWQIVVVIMILGLMGTWLV) traverse the membrane as a helical segment. Residues 196–538 (ANTVKKATLG…TIPKHEAKEG (343 aa)) lie on the Cytoplasmic side of the membrane. The PAS domain occupies 216–282 (QQKEAILQSI…PEVLQVGKGQ (67 aa)). The Histidine kinase domain occupies 339–534 (AQTHEFSNKL…CFVLTIPKHE (196 aa)). His342 carries the post-translational modification Phosphohistidine; by autocatalysis.

The protein resides in the cell membrane. It catalyses the reaction ATP + protein L-histidine = ADP + protein N-phospho-L-histidine.. In terms of biological role, member of the two-component regulatory system CitT/CitS. Functions probably as a membrane-associated protein kinase that phosphorylates CitT in response to environmental citrate or Mg(2+)-citrate complex. This Halalkalibacterium halodurans (strain ATCC BAA-125 / DSM 18197 / FERM 7344 / JCM 9153 / C-125) (Bacillus halodurans) protein is Sensor protein CitS (citS).